Here is a 106-residue protein sequence, read N- to C-terminus: Large ribosomal subunit protein eL42 (106 aa).

This sequence belongs to the eukaryotic ribosomal protein eL42 family.

The protein is Large ribosomal subunit protein eL42 (RPL44) of Kluyveromyces marxianus (Yeast).